Reading from the N-terminus, the 191-residue chain is Large ribosomal subunit protein bL9 (191 aa).

The tract at residues 171–191 (EDALKPEDFFNPEAELESEEE) is disordered.

This sequence belongs to the bacterial ribosomal protein bL9 family.

In terms of biological role, binds to the 23S rRNA. This chain is Large ribosomal subunit protein bL9, found in Rhizobium meliloti (strain 1021) (Ensifer meliloti).